The primary structure comprises 200 residues: Inducible T-cell costimulator (200 aa).

The signal sequence occupies residues M1–G20. Over E21–L144 the chain is Extracellular. A glycan (N-linked (GlcNAc...) asparagine) is linked at N23. Residues M30–E133 enclose the Ig-like V-type domain. Cystine bridges form between C42–C109 and C63–C83. N-linked (GlcNAc...) asparagine glycosylation is found at N89 and N123. Residues P145–F165 form a helical membrane-spanning segment. At S166 to S200 the chain is on the cytoplasmic side.

In terms of assembly, homodimer; disulfide-linked. Interacts with ICOSLG. Interacts with PIK3R1. Interacts with TBK1; this interaction is critical for the maturation of T follicular regulatory cells. N-glycosylated. Expressed on activated T-cells and resting memory T-cells. High expression seen in the thymic medulla and in the germinal centers and T-cell zones of lymph nodes and Peyer patches. Expressed at low levels in the spleen.

It is found in the cell membrane. In terms of biological role, stimulatory receptor expressed in activated or antigen-experienced T-cells that plays an important role in the immune response. Upon binding to its ligand ICOSL expressed on antigen presenting cells (APCs), delivers costimulatory signals that enhances all basic T-cell responses to a foreign antigen, namely proliferation, secretion of lymphokines including IL10, up-regulation of molecules that mediate cell-cell interaction, and effective help for antibody secretion by B-cells. Also acts as a costimulatory receptor critical for the differentiation of T follicular regulatory cells upon immune challenges such as viral infection. Mechanistically, potentiates TCR-induced calcium flux by augmenting PLCG1 activation and actin remodeling. In addition, activates PI3K signaling pathways independently of calcium flux. Essential both for efficient interaction between T and B-cells and for normal antibody responses to T-cell dependent antigens. Prevents the apoptosis of pre-activated T-cells. Plays a critical role in CD40-mediated class switching of immunoglobin isotypes. The chain is Inducible T-cell costimulator (Icos) from Mus musculus (Mouse).